We begin with the raw amino-acid sequence, 431 residues long: MSTQMSVFLSQEAAQPQWGARAILSFSEAGATIHIGEGHDLGAVQRAGRTLDGQGIALVALSGKGWDLESVWAFYQGYRGPKKKNALEWDALAEADQVELEARIRATDWTRDIINKTAEEVAPRQLATMAAEYIKSVAPAGTVKAKIVKDKDLLTEGWEGIYAVGRGSERTSAMLQLDFNPTGDENAPVFACLVGKGITFDSGGYSIKPGQFMTAMKADMGGAATITGGLGLAIERGLNKRIKLILCCAENMISGRALKLGDIITYKNGKTVEIMNTDAEGRLVLADGLMFASAQNPELIIDCATLTGAAKNALGNDYHALLSFDDELSHQALTAANQEKEGLWPLPLADFHRGMLPSNFADLSNISSGDYTPGASTAAAFLSYFVDDYKKGWIHMDCAGTYRKSSSDKWAAGATGMGVRTLARLLIDQAK.

2 residues coordinate Mn(2+): K196 and D201. Residue K208 is part of the active site. D219, D278, and E280 together coordinate Mn(2+). R282 is a catalytic residue.

The protein belongs to the peptidase M17 family. In terms of assembly, homohexamer. It depends on Mn(2+) as a cofactor.

It localises to the cytoplasm. It carries out the reaction Release of an N-terminal amino acid, Xaa, from a peptide or arylamide. Xaa is preferably Glu or Asp but may be other amino acids, including Leu, Met, His, Cys and Gln.. Its function is as follows. Probably plays an important role in intracellular peptide degradation. This is Peptidase B from Vibrio atlanticus (strain LGP32) (Vibrio splendidus (strain Mel32)).